Consider the following 305-residue polypeptide: UDP-3-O-acyl-N-acetylglucosamine deacetylase (305 aa).

The Zn(2+) site is built by His-79, His-238, and Asp-242. The active-site Proton donor is the His-265.

Belongs to the LpxC family. It depends on Zn(2+) as a cofactor.

It carries out the reaction a UDP-3-O-[(3R)-3-hydroxyacyl]-N-acetyl-alpha-D-glucosamine + H2O = a UDP-3-O-[(3R)-3-hydroxyacyl]-alpha-D-glucosamine + acetate. It functions in the pathway glycolipid biosynthesis; lipid IV(A) biosynthesis; lipid IV(A) from (3R)-3-hydroxytetradecanoyl-[acyl-carrier-protein] and UDP-N-acetyl-alpha-D-glucosamine: step 2/6. Catalyzes the hydrolysis of UDP-3-O-myristoyl-N-acetylglucosamine to form UDP-3-O-myristoylglucosamine and acetate, the committed step in lipid A biosynthesis. The protein is UDP-3-O-acyl-N-acetylglucosamine deacetylase of Edwardsiella ictaluri (strain 93-146).